A 256-amino-acid polypeptide reads, in one-letter code: Anti-Pycsar protein Apyc1 (256 aa).

The segment at 21–230 (YNNSALVTFT…EDQDRVFLMH (210 aa)) is beta-lactamase-like. Residues His64, His66, Asp68, and His69 each contribute to the Zn(2+) site. Active-site residues include Glu74 and Tyr112. Zn(2+) contacts are provided by His155, Asp179, and His230.

It belongs to the anti-Pycsar protein Apyc1 family. As to quaternary structure, homodimer. Zn(2+) is required as a cofactor.

The catalysed reaction is 3',5'-cyclic CMP + H2O = CMP + H(+). It catalyses the reaction 3',5'-cyclic UMP + H2O = UMP + H(+). Its function is as follows. Counteracts the host Pycsar antiviral defense system. Phosphodiesterase that enables metal-dependent hydrolysis of host cyclic nucleotide Pycsar defense signals such as cCMP and cUMP. This Bacillus phage BSP38 protein is Anti-Pycsar protein Apyc1.